The primary structure comprises 311 residues: tRNA dimethylallyltransferase (311 aa).

8–15 serves as a coordination point for ATP; sequence GPTGVGKS. Position 10–15 (10–15) interacts with substrate; the sequence is TGVGKS.

This sequence belongs to the IPP transferase family. As to quaternary structure, monomer. Requires Mg(2+) as cofactor.

It carries out the reaction adenosine(37) in tRNA + dimethylallyl diphosphate = N(6)-dimethylallyladenosine(37) in tRNA + diphosphate. Catalyzes the transfer of a dimethylallyl group onto the adenine at position 37 in tRNAs that read codons beginning with uridine, leading to the formation of N6-(dimethylallyl)adenosine (i(6)A). The chain is tRNA dimethylallyltransferase from Mycobacterium leprae (strain Br4923).